A 199-amino-acid chain; its full sequence is Putative pseudouridine methyltransferase (199 aa).

2 residues coordinate S-adenosyl-L-methionine: Leu132 and Cys186.

The protein belongs to the methyltransferase superfamily. TrmY family.

The protein resides in the cytoplasm. In Vibrio parahaemolyticus serotype O3:K6 (strain RIMD 2210633), this protein is Putative pseudouridine methyltransferase.